The primary structure comprises 260 residues: Adenosylcobinamide-GDP ribazoletransferase (260 aa).

Transmembrane regions (helical) follow at residues 40-60 (AFPF…LLLL), 64-84 (ADPL…TGAL), 117-137 (YGAI…AAIV), 142-162 (PLAA…AITW), 189-209 (FALV…FGLW), and 210-230 (PLVA…VFIR).

The protein belongs to the CobS family. Requires Mg(2+) as cofactor.

The protein localises to the cell inner membrane. The catalysed reaction is alpha-ribazole + adenosylcob(III)inamide-GDP = adenosylcob(III)alamin + GMP + H(+). It catalyses the reaction alpha-ribazole 5'-phosphate + adenosylcob(III)inamide-GDP = adenosylcob(III)alamin 5'-phosphate + GMP + H(+). It functions in the pathway cofactor biosynthesis; adenosylcobalamin biosynthesis; adenosylcobalamin from cob(II)yrinate a,c-diamide: step 7/7. Functionally, joins adenosylcobinamide-GDP and alpha-ribazole to generate adenosylcobalamin (Ado-cobalamin). Also synthesizes adenosylcobalamin 5'-phosphate from adenosylcobinamide-GDP and alpha-ribazole 5'-phosphate. The polypeptide is Adenosylcobinamide-GDP ribazoletransferase (Rhizobium etli (strain CIAT 652)).